Consider the following 492-residue polypeptide: N-succinylglutamate 5-semialdehyde dehydrogenase (492 aa).

220–225 (GSANTG) contributes to the NAD(+) binding site. Residues Glu-243 and Cys-277 contribute to the active site.

This sequence belongs to the aldehyde dehydrogenase family. AstD subfamily.

The enzyme catalyses N-succinyl-L-glutamate 5-semialdehyde + NAD(+) + H2O = N-succinyl-L-glutamate + NADH + 2 H(+). It participates in amino-acid degradation; L-arginine degradation via AST pathway; L-glutamate and succinate from L-arginine: step 4/5. Its function is as follows. Catalyzes the NAD-dependent reduction of succinylglutamate semialdehyde into succinylglutamate. The polypeptide is N-succinylglutamate 5-semialdehyde dehydrogenase (Shigella flexneri serotype 5b (strain 8401)).